Here is a 739-residue protein sequence, read N- to C-terminus: Catalase-peroxidase 2 (739 aa).

Positions 1 to 26 (MKKSTIPTLSALTLAMSLAFGGSVIA) are cleaved as a signal peptide. A cross-link (tryptophyl-tyrosyl-methioninium (Trp-Tyr) (with M-253)) is located at residues 105–227 (WHSAGVYRIF…MGATQMGLIY (123 aa)). His106 functions as the Proton acceptor in the catalytic mechanism. Positions 227–253 (YVNPEGPNGVPDPLASAKEIRDTFGRM) form a cross-link, tryptophyl-tyrosyl-methioninium (Tyr-Met) (with W-105). His268 serves as a coordination point for heme b.

It belongs to the peroxidase family. Peroxidase/catalase subfamily. In terms of assembly, homodimer or homotetramer. Heme b is required as a cofactor. Formation of the three residue Trp-Tyr-Met cross-link is important for the catalase, but not the peroxidase activity of the enzyme.

The enzyme catalyses H2O2 + AH2 = A + 2 H2O. It carries out the reaction 2 H2O2 = O2 + 2 H2O. Functionally, bifunctional enzyme with both catalase and broad-spectrum peroxidase activity. This Shewanella sp. (strain MR-7) protein is Catalase-peroxidase 2.